The primary structure comprises 213 residues: V-type proton ATPase subunit c'' (213 aa).

At 1-14 (MNKESKDDDMSLGK) the chain is on the vacuolar side. Residues 15–35 (FSFSHFLYYLVLIVVIVYGLY) traverse the membrane as a helical segment. The Cytoplasmic portion of the chain corresponds to 36 to 61 (KLFTGHGSDINFGKFLLRTSPYMWAN). Residues 62–82 (LGIALCVGLSVVGAAWGIFIT) traverse the membrane as a helical segment. At 83 to 100 (GSSMIGAGVRAPRITTKN) the chain is on the vacuolar side. A helical transmembrane segment spans residues 101–121 (LISIIFCEVVAIYGLIIAIVF). Residues 122–144 (SSKLTVATAENMYSKSNLYTGYS) lie on the Cytoplasmic side of the membrane. A helical transmembrane segment spans residues 145–165 (LFWAGITVGASNLICGIAVGI). At 166-183 (TGATAAISDAADSALFVK) the chain is on the vacuolar side. A helical membrane pass occupies residues 184–204 (ILVIEIFGSILGLLGLIVGLL). Residues 205 to 213 (MAGKASEFQ) lie on the Cytoplasmic side of the membrane.

The protein belongs to the V-ATPase proteolipid subunit family. As to quaternary structure, V-ATPase is a heteromultimeric enzyme composed of a peripheral catalytic V1 complex (components A to H) attached to an integral membrane V0 proton pore complex (components: a, c, c', c'', d, e, f and VOA1). The decameric c-ring forms the proton-conducting pore, and is composed of eight proteolipid subunits c, one subunit c' and one subunit c''.

The protein resides in the vacuole membrane. Proton-conducting pore forming subunit of the V0 complex of vacuolar(H+)-ATPase (V-ATPase), a multisubunit enzyme composed of a peripheral complex (V1) that hydrolyzes ATP and a membrane integral complex (V0) that translocates protons. V-ATPase is responsible for acidifying and maintaining the pH of intracellular compartments. This is V-type proton ATPase subunit c'' (VMA16) from Saccharomyces cerevisiae (strain ATCC 204508 / S288c) (Baker's yeast).